Here is a 1153-residue protein sequence, read N- to C-terminus: Stress response protein nst1 (1153 aa).

4 disordered regions span residues 1-212, 288-364, 421-467, and 507-941; these read MVPA…TSTQ, QGSF…DEET, ESLH…EQRM, and MEEE…TQRD. Positions 11 to 30 are enriched in low complexity; the sequence is SSSTMPNSSSTTAHSAPTTN. Residues 53–63 show a composition bias toward basic residues; the sequence is NRKKQKRRQKQ. Over residues 64–73 the composition is skewed to low complexity; that stretch reads AARLAERQLA. Positions 76–90 are enriched in polar residues; sequence HVSTDDATQNGSSHT. Composition is skewed to basic and acidic residues over residues 91–109 and 116–128; these read NPERHHSDDGGADGPDHEQ and YPKDGQDSTEAHI. Residues 129 to 140 are compositionally biased toward polar residues; the sequence is DSQNPQGPNGTE. Positions 146-160 are enriched in basic residues; the sequence is TGRKSKKKKGKKGRN. Over residues 169–182 the composition is skewed to low complexity; the sequence is TSTPMSTPSVSMSH. Over residues 312–321 the composition is skewed to polar residues; that stretch reads GQHTRTQGQF. Acidic residues-rich tracts occupy residues 332 to 363 and 433 to 462; these read TEDDDLEENYDEEEDDGDEPYSDEELDEEDEE and DDEDYDDEEDEDYDSQEEEDYEEDEMDAMT. Residues 447–658 are a coiled coil; the sequence is SQEEEDYEED…EQQAKKDTAK (212 aa). 2 stretches are compositionally biased toward basic and acidic residues: residues 507–526 and 536–674; these read MEEETRNEQRNAKKAREAQK and QAKE…DQAK. Over residues 721–739 the composition is skewed to low complexity; that stretch reads RQPSQQDSHSSSPHSQAPS. The span at 740–769 shows a compositional bias: polar residues; the sequence is TDPSQASLSPRSMPVSQSSGVASGNSQQGQ. Residues 913 to 925 show a composition bias toward low complexity; the sequence is PISRPSPIKRPSS. Basic and acidic residues predominate over residues 931-941; it reads QKGDDRTTQRD.

Belongs to the NST1 family.

Its subcellular location is the cytoplasm. May act as a negative regulator of salt tolerance. This chain is Stress response protein nst1 (nst1), found in Aspergillus fumigatus (strain ATCC MYA-4609 / CBS 101355 / FGSC A1100 / Af293) (Neosartorya fumigata).